Reading from the N-terminus, the 920-residue chain is DNA ligase (920 aa).

NAD(+) contacts are provided by residues 90-94 (DAAYD), 139-140 (SL), and Glu-173. The active-site N6-AMP-lysine intermediate is Lys-175. Arg-196, Glu-235, Lys-360, and Lys-384 together coordinate NAD(+). 4 residues coordinate Zn(2+): Cys-481, Cys-484, Cys-500, and Cys-506. The interval 659–691 (RAQGEAAIESAETQGDTASETTGAPTGAEAPLG) is disordered. A compositionally biased stretch (polar residues) spans 669-682 (AETQGDTASETTGA). A BRCT domain is found at 839 to 920 (SLPQTLAGKT…FAQLLATGTI (82 aa)).

It belongs to the NAD-dependent DNA ligase family. LigA subfamily. Requires Mg(2+) as cofactor. It depends on Mn(2+) as a cofactor.

It catalyses the reaction NAD(+) + (deoxyribonucleotide)n-3'-hydroxyl + 5'-phospho-(deoxyribonucleotide)m = (deoxyribonucleotide)n+m + AMP + beta-nicotinamide D-nucleotide.. In terms of biological role, DNA ligase that catalyzes the formation of phosphodiester linkages between 5'-phosphoryl and 3'-hydroxyl groups in double-stranded DNA using NAD as a coenzyme and as the energy source for the reaction. It is essential for DNA replication and repair of damaged DNA. The sequence is that of DNA ligase from Bifidobacterium longum (strain NCC 2705).